Here is a 2130-residue protein sequence, read N- to C-terminus: Dedicator of cytokinesis protein 7 (2130 aa).

Residue S30 is modified to Phosphoserine. The interval 137–175 is disordered; that stretch reads GFNPNTLDKQKERQKGLPRQVFESDEAPDGSSYQDEQDD. Phosphoserine occurs at positions 180 and 182. Residues 365 to 395 are a coiled coil; that stretch reads FKEADATKNKEKLEKLKSQADQFCQRLGKYR. K381 is subject to N6-methyllysine. At T450 the chain carries Phosphothreonine. S452 is subject to Phosphoserine. The region spanning 561–727 is the C2 DOCK-type domain; sequence RNLLYIYPQS…GVFNVEVVAV (167 aa). 7 positions are modified to phosphoserine: S862, S864, S882, S888, S896, S900, and S905. A compositionally biased stretch (low complexity) spans 888–901; sequence SLNLNRSRSLSNSN. Positions 888–966 are disordered; the sequence is SLNLNRSRSL…SCNRMSSHTE (79 aa). 2 positions are modified to phosphothreonine: T907 and T909. 8 positions are modified to phosphoserine: S910, S929, S963, S1382, S1420, S1422, S1424, and S1428. Over residues 942–966 the composition is skewed to polar residues; the sequence is SNPSPSAESTQAMDRSCNRMSSHTE. The DOCKER domain maps to 1668–2104; it reads KGYQTSPDLR…LQPLINRKIP (437 aa). N6-acetyllysine is present on K1952. A coiled-coil region spans residues 2076 to 2102; the sequence is DQKEYQRELERNYHRLKEALQPLINRK. S2119 is modified (phosphoserine).

This sequence belongs to the DOCK family. As to quaternary structure, component of the DOCK7-induced septin displacement/DISP complex, at least composed of DOCK7, LRCH3 and MYO6. Interacts with TSC1. Interacts with nucleotide-free RAC1 and RAC3. Interacts with TACC3. Interacts with CRY1. Interacts with NOD2.

It localises to the cell projection. The protein resides in the axon. Functionally, functions as a guanine nucleotide exchange factor (GEF), which activates Rac1 and Rac3 Rho small GTPases by exchanging bound GDP for free GTP. Does not have a GEF activity for CDC42. Required for STMN1 'Ser-15' phosphorylation during axon formation and consequently for neuronal polarization. As part of the DISP complex, may regulate the association of septins with actin and thereby regulate the actin cytoskeleton. Has a role in pigmentation. Involved in the regulation of cortical neurogenesis through the control of radial glial cells (RGCs) proliferation versus differentiation; negatively regulates the basal-to-apical interkinetic nuclear migration of RGCs by antagonizing the microtubule growth-promoting function of TACC3. The chain is Dedicator of cytokinesis protein 7 (Dock7) from Mus musculus (Mouse).